The chain runs to 559 residues: MEYDYIIIGAGSAGNVLAARLTEESDVSVLLLEAGGPDYRLDFRTQMPAALAFPLQGKRYNWAYETDPEPHMNDRRMECGRGKGLGGSSLINGMCYIRGNAMDFDHWATMSGLEDWSYLDCLPYFRKAETRDVGANDYHGASGPVSVTTPKMGNNELFHAMVEAGVQAGYPRTDDLNGYQQEGFGPMDRTVTPKGRRASTARGYLDQAKSRKNLTIVTHALTDRILFDGKRAVGVAYFKGESAQTAKARREVLLCAGAIASPQILQRSGVGPKDLLQRLDISVVHDLPGVGENLQDHLEMYLQYACKEPVSLYPALQWFNQPKIGAEWLFNGTGIGASNQFEAGGFIRSRDEFTWPNIQYHFLPVAINYNGSNAVKEHGFQAHVGSMRSLSRGRVQVRSKDAREHPSILFNYMSTEQDWQEFRDAIRITREIMAQPALDKYRGREISPGLAVQTDEELDEFIRTHAETAFHPSCSCKMGEDDMSVVDGQGCVHGMEGLRVVDASIMPQIITGNLNATTIMIAEKIADRIRRRQPLPRSKARYYVAGSTPVRKAPLKPAS.

4-33 (DYIIIGAGSAGNVLAARLTEESDVSVLLLE) is a binding site for FAD. The interval 182 to 202 (EGFGPMDRTVTPKGRRASTAR) is disordered. Catalysis depends on H471, which acts as the Proton acceptor.

Belongs to the GMC oxidoreductase family. It depends on FAD as a cofactor.

It catalyses the reaction choline + A = betaine aldehyde + AH2. It carries out the reaction betaine aldehyde + NAD(+) + H2O = glycine betaine + NADH + 2 H(+). It functions in the pathway amine and polyamine biosynthesis; betaine biosynthesis via choline pathway; betaine aldehyde from choline (cytochrome c reductase route): step 1/1. In terms of biological role, involved in the biosynthesis of the osmoprotectant glycine betaine. Catalyzes the oxidation of choline to betaine aldehyde and betaine aldehyde to glycine betaine at the same rate. The protein is Oxygen-dependent choline dehydrogenase of Pectobacterium atrosepticum (strain SCRI 1043 / ATCC BAA-672) (Erwinia carotovora subsp. atroseptica).